We begin with the raw amino-acid sequence, 545 residues long: MSKTTKKFNSLCIDLPRDLSLEIYQSIASVATGSGDPHSDDFTAIAYLRDELLTKHPTLGSGNDEATRRTLAIAKLREANGDRGQINREGFLHDKSLSWDPDVLQTSIRSLIGNLLSGYRSSLFGQCTFSNGAPMGHKLQDAAPYKKFAEQATVTPRALRAALLVRDQCAPWIRHAVRYNESYEFRLVVGNGVFTVPKNNKIDRAACKEPDMNMYLQKGVGAFIRRRLKSVGIDLNDQSINQRLAQQGSVDGSLATIDLSSASDSISDRLVWSFLPPELYSYLDRIRSHYGIVDGETIRWELFSTMGNGFTFELESMIFWAIVKATQIHFGNAGTIGIYGDDIICPSEIAPRVLEALAYYGFKPNLRKTFVSGLFRESCGAHFYRGVDVKPFYIKKPVDNLFALMLILNRLRGWGVVGGMSDPRLYKVWVRLSSQVPSMFFGGTDLAADYYVVSPPTAVSVYTKTPYGRLLADTRTSGFRLARIARERKFFSEKHDSGRYIAWFHTGGEITDSMKSAGVRVIRTSEWLTPVPTFPQECGPASSPR.

Positions 243–373 (RLAQQGSVDG…PNLRKTFVSG (131 aa)) constitute a RdRp catalytic domain.

In terms of assembly, part of the viral RNA-dependent RNA polymerase complex, the other subunits are probably the host ribosomal protein S1, EF-Tu and EF-Ts.

It carries out the reaction RNA(n) + a ribonucleoside 5'-triphosphate = RNA(n+1) + diphosphate. Its function is as follows. This is the catalytic subunit of the viral RNA-dependent RNA polymerase complex. This complex is involved in viral RNA replication that produces (+)-stranded genomes via a complementary, (-)-stranded intermediate. The chain is RNA-directed RNA polymerase beta chain from Escherichia coli (Bacteriophage MS2).